Reading from the N-terminus, the 347-residue chain is NADH-ubiquinone oxidoreductase chain 2 (347 aa).

Helical transmembrane passes span 1–21 (MNPL…LITA), 25–45 (HWFL…PVLT), 55–75 (AAIK…MAIL), 96–116 (LMIL…FWVP), 123–143 (TLTS…SIMY), 145–165 (IFPV…IMVG), 178–198 (ILAY…PYNP), 199–219 (NITI…FLAL), 237–257 (LTWL…LPPL), 274–294 (GTLI…YFYM), and 324–344 (LLLP…PLTF).

Belongs to the complex I subunit 2 family. In terms of assembly, core subunit of respiratory chain NADH dehydrogenase (Complex I) which is composed of 45 different subunits. Interacts with TMEM242.

The protein localises to the mitochondrion inner membrane. The enzyme catalyses a ubiquinone + NADH + 5 H(+)(in) = a ubiquinol + NAD(+) + 4 H(+)(out). In terms of biological role, core subunit of the mitochondrial membrane respiratory chain NADH dehydrogenase (Complex I) which catalyzes electron transfer from NADH through the respiratory chain, using ubiquinone as an electron acceptor. Essential for the catalytic activity and assembly of complex I. The sequence is that of NADH-ubiquinone oxidoreductase chain 2 from Symphalangus syndactylus (Siamang).